The following is an 897-amino-acid chain: Chromodomain-helicase-DNA-binding protein 1-like (897 aa).

An Omega-N-methylarginine modification is found at arginine 9. The region spanning 58 to 223 is the Helicase ATP-binding domain; the sequence is AQRFHCQNGC…YSLLSFVEPD (166 aa). 71 to 78 lines the ATP pocket; sequence DEMGLGKT. The short motif at 174-177 is the DEAH box element; the sequence is DEAH. A Helicase C-terminal domain is found at 351–513; sequence LLDKLLAFLY…QKPAADADLQ (163 aa). Phosphoserine is present on residues serine 540, serine 607, serine 618, serine 628, and serine 636. Positions 601-635 are regulatory linker segment (RLS); that stretch reads TLLEKASQEGRSLRNKGSVLIPGLVEGSTKRKRVL. The tract at residues 615–673 is required for ATPase activity; it reads NKGSVLIPGLVEGSTKRKRVLSPEELEDRQKKRQEAAAKRRRLIEEKKRQKEEAEHKKK. 2 disordered regions span residues 628–654 and 687–711; these read STKR…AAKR and LPSE…DYQD. Residues 638–675 adopt a coiled-coil conformation; sequence EELEDRQKKRQEAAAKRRRLIEEKKRQKEEAEHKKKMA. Positions 642–654 are enriched in basic and acidic residues; it reads DRQKKRQEAAAKR. Positions 690-711 are enriched in acidic residues; it reads EESEPEDLENGEESSAELDYQD. The region spanning 704–897 is the Macro domain; that stretch reads SAELDYQDPD…SSSSSRQLVP (194 aa). Serine 891 is subject to Phosphoserine.

The protein belongs to the SNF2/RAD54 helicase family. Interacts with nucleosomes; interacts with the acidic patch of histones. Interacts (via macro domain) with PARP1; interacts only when PARP1 is poly-ADP-ribosylated (PARylated). Interacts with CIAO1. In terms of tissue distribution, frequently overexpressed in hepatomacellular carcinomas.

It is found in the nucleus. Its subcellular location is the chromosome. The catalysed reaction is ATP + H2O = ADP + phosphate + H(+). Its activity is regulated as follows. Adopts an inactive conformation in absence of DNA damage. Binding to poly-ADP-ribosylated histones activates the ATP-dependent chromatin remodeler activity. ATP-dependent chromatin remodeler that mediates chromatin-remodeling following DNA damage. Recruited to DNA damage sites through interaction with poly-ADP-ribose: specifically recognizes and binds histones that are poly-ADP-ribosylated on serine residues in response to DNA damage. Poly-ADP-ribose-binding activates the ATP-dependent chromatin remodeler activity, thereby regulating chromatin during DNA repair. Catalyzes nucleosome sliding away from DNA breaks in an ATP-dependent manner. Chromatin remodeling activity promotes PARP2 removal from chromatin. In Homo sapiens (Human), this protein is Chromodomain-helicase-DNA-binding protein 1-like.